The following is a 70-amino-acid chain: Large ribosomal subunit protein uL29 (70 aa).

This sequence belongs to the universal ribosomal protein uL29 family.

The polypeptide is Large ribosomal subunit protein uL29 (Prochlorococcus marinus (strain MIT 9313)).